A 275-amino-acid chain; its full sequence is Orotidine 5'-phosphate decarboxylase (275 aa).

Catalysis depends on lysine 95, which acts as the Proton donor.

This sequence belongs to the OMP decarboxylase family. Type 2 subfamily.

The enzyme catalyses orotidine 5'-phosphate + H(+) = UMP + CO2. Its pathway is pyrimidine metabolism; UMP biosynthesis via de novo pathway; UMP from orotate: step 2/2. The polypeptide is Orotidine 5'-phosphate decarboxylase (Delftia acidovorans (strain DSM 14801 / SPH-1)).